The following is a 106-amino-acid chain: Thiosulfate sulfurtransferase GlpE (106 aa).

The 89-residue stretch at glutamate 17 to arginine 105 folds into the Rhodanese domain. Catalysis depends on cysteine 65, which acts as the Cysteine persulfide intermediate.

Belongs to the GlpE family.

The protein resides in the cytoplasm. It catalyses the reaction thiosulfate + hydrogen cyanide = thiocyanate + sulfite + 2 H(+). The catalysed reaction is thiosulfate + [thioredoxin]-dithiol = [thioredoxin]-disulfide + hydrogen sulfide + sulfite + 2 H(+). Its function is as follows. Transferase that catalyzes the transfer of sulfur from thiosulfate to thiophilic acceptors such as cyanide or dithiols. May function in a CysM-independent thiosulfate assimilation pathway by catalyzing the conversion of thiosulfate to sulfite, which can then be used for L-cysteine biosynthesis. In Vibrio parahaemolyticus serotype O3:K6 (strain RIMD 2210633), this protein is Thiosulfate sulfurtransferase GlpE.